Here is a 316-residue protein sequence, read N- to C-terminus: Pentatricopeptide repeat-containing protein At1g19525 (316 aa).

PPR repeat units follow at residues D9–P43, D44–A78, S79–P113, S115–P149, D150–I184, and G185–P219.

It belongs to the PPR family. P subfamily.

This chain is Pentatricopeptide repeat-containing protein At1g19525, found in Arabidopsis thaliana (Mouse-ear cress).